Here is a 1976-residue protein sequence, read N- to C-terminus: Protein TIC 214 (1976 aa).

6 helical membrane-spanning segments follow: residues 11-31, 64-84, 87-107, 126-146, 173-193, and 221-241; these read LLLL…YYGF, FIMG…HLAL, PHTL…FFWN, LSIQ…HFVL, FFGW…VLSW, and IFSI…PSPI. A compositionally biased stretch (acidic residues) spans 619–635; it reads FEEEEEEEEEDDQEEST. Disordered stretches follow at residues 619 to 642 and 830 to 861; these read FEEE…GIRS and SSYV…EDKR. Positions 836 to 861 are enriched in basic and acidic residues; it reads GAKEKEKIEEEHEEEKGEYKRKEDKR. Helical transmembrane passes span 1054–1074 and 1202–1222; these read IIKI…FFVL and IYMS…QFFL. Positions 1633–1665 are enriched in basic and acidic residues; it reads QKERFHPKPKVESNQKGYLELENRNRDEKERQH. A disordered region spans residues 1633–1669; the sequence is QKERFHPKPKVESNQKGYLELENRNRDEKERQHQGNL.

Belongs to the TIC214 family. Part of the Tic complex.

It is found in the plastid. It localises to the chloroplast inner membrane. Involved in protein precursor import into chloroplasts. May be part of an intermediate translocation complex acting as a protein-conducting channel at the inner envelope. This chain is Protein TIC 214, found in Nymphaea alba (White water-lily).